Consider the following 148-residue polypeptide: UPF0260 protein YE2365 (148 aa).

This sequence belongs to the UPF0260 family.

The protein is UPF0260 protein YE2365 of Yersinia enterocolitica serotype O:8 / biotype 1B (strain NCTC 13174 / 8081).